A 296-amino-acid polypeptide reads, in one-letter code: Hca operon transcriptional activator HcaR (296 aa).

One can recognise an HTH lysR-type domain in the interval 1 to 58 (MELRHLRYFVAVAQALNFTRAAEKLHTSQPSLSSQIRDLENCVGVPLLVRDKRKVALT). A DNA-binding region (H-T-H motif) is located at residues 18 to 38 (FTRAAEKLHTSQPSLSSQIRD).

The protein belongs to the LysR transcriptional regulatory family.

Its function is as follows. Transcriptional activator of the hca operon for 3-phenylpropionic acid catabolism. The chain is Hca operon transcriptional activator HcaR (hcaR) from Escherichia coli (strain K12).